The primary structure comprises 81 residues: Conotoxin Eb11.3 (81 aa).

The first 23 residues, Met1–Gly23, serve as a signal peptide directing secretion. Cystine bridges form between Cys27-Cys41, Cys34-Cys48, Cys40-Cys56, and Cys47-Cys62. Leu69 is modified (leucine amide). A propeptide spanning residues Ala73–Arg81 is cleaved from the precursor.

It belongs to the conotoxin I2 superfamily. As to expression, expressed by the venom duct.

Its subcellular location is the secreted. The chain is Conotoxin Eb11.3 from Conus eburneus (Ivory cone).